Here is a 286-residue protein sequence, read N- to C-terminus: Polyamine aminopropyltransferase (286 aa).

The PABS domain occupies 5–238; that stretch reads PLWHETLHDH…GIMTFAWASD (234 aa). Gln-33 lines the S-methyl-5'-thioadenosine pocket. His-64 and Asp-88 together coordinate spermidine. Residues Glu-108 and 140 to 141 contribute to the S-methyl-5'-thioadenosine site; that span reads DG. Asp-158 serves as the catalytic Proton acceptor. 158 to 161 is a spermidine binding site; sequence DCTD. Pro-165 contributes to the S-methyl-5'-thioadenosine binding site.

Belongs to the spermidine/spermine synthase family. Homodimer or homotetramer.

It localises to the cytoplasm. It carries out the reaction S-adenosyl 3-(methylsulfanyl)propylamine + putrescine = S-methyl-5'-thioadenosine + spermidine + H(+). It participates in amine and polyamine biosynthesis; spermidine biosynthesis; spermidine from putrescine: step 1/1. In terms of biological role, catalyzes the irreversible transfer of a propylamine group from the amino donor S-adenosylmethioninamine (decarboxy-AdoMet) to putrescine (1,4-diaminobutane) to yield spermidine. The protein is Polyamine aminopropyltransferase of Klebsiella pneumoniae (strain 342).